Consider the following 519-residue polypeptide: Ion-translocating oxidoreductase complex subunit C (519 aa).

4Fe-4S ferredoxin-type domains are found at residues 372-401 and 411-440; these read ETPE…FELN and GAAK…VQSF. Positions 381, 384, 387, 391, 420, 423, 426, and 430 each coordinate [4Fe-4S] cluster. Residues 494–519 form a disordered region; it reads KAEEAAAAAAMPPPATATAIQGEATP.

This sequence belongs to the 4Fe4S bacterial-type ferredoxin family. RnfC subfamily. In terms of assembly, the complex is composed of six subunits: RnfA, RnfB, RnfC, RnfD, RnfE and RnfG. Requires [4Fe-4S] cluster as cofactor.

Its subcellular location is the cellular chromatophore membrane. Functionally, part of a membrane-bound complex that couples electron transfer with translocation of ions across the membrane. Required for nitrogen fixation. Involved in electron transfer to nitrogenase. The protein is Ion-translocating oxidoreductase complex subunit C of Rhodobacter capsulatus (Rhodopseudomonas capsulata).